The chain runs to 699 residues: Elongation factor G (699 aa).

The 276-residue stretch at 8-283 folds into the tr-type G domain; sequence EHIRNIGICA…AVVDFLPSPI (276 aa). GTP-binding positions include 17–24, 81–85, and 135–138; these read AHIDAGKT, DTPGH, and NKMD.

This sequence belongs to the TRAFAC class translation factor GTPase superfamily. Classic translation factor GTPase family. EF-G/EF-2 subfamily.

It localises to the cytoplasm. Its function is as follows. Catalyzes the GTP-dependent ribosomal translocation step during translation elongation. During this step, the ribosome changes from the pre-translocational (PRE) to the post-translocational (POST) state as the newly formed A-site-bound peptidyl-tRNA and P-site-bound deacylated tRNA move to the P and E sites, respectively. Catalyzes the coordinated movement of the two tRNA molecules, the mRNA and conformational changes in the ribosome. In Rickettsia africae (strain ESF-5), this protein is Elongation factor G.